The primary structure comprises 262 residues: tRNA pseudouridine synthase A (262 aa).

Residue D51 is the Nucleophile of the active site. Residue Y109 coordinates substrate.

It belongs to the tRNA pseudouridine synthase TruA family. As to quaternary structure, homodimer.

It carries out the reaction uridine(38/39/40) in tRNA = pseudouridine(38/39/40) in tRNA. Functionally, formation of pseudouridine at positions 38, 39 and 40 in the anticodon stem and loop of transfer RNAs. The sequence is that of tRNA pseudouridine synthase A from Actinobacillus pleuropneumoniae serotype 5b (strain L20).